A 240-amino-acid chain; its full sequence is Triosephosphate isomerase (240 aa).

8 to 10 contacts substrate; the sequence is NWK. H93 acts as the Electrophile in catalysis. The Proton acceptor role is filled by E160. Residue G166 coordinates substrate.

Belongs to the triosephosphate isomerase family. As to quaternary structure, homodimer.

The protein resides in the cytoplasm. It catalyses the reaction D-glyceraldehyde 3-phosphate = dihydroxyacetone phosphate. It participates in carbohydrate biosynthesis; gluconeogenesis. It functions in the pathway carbohydrate degradation; glycolysis; D-glyceraldehyde 3-phosphate from glycerone phosphate: step 1/1. In terms of biological role, involved in the gluconeogenesis. Catalyzes stereospecifically the conversion of dihydroxyacetone phosphate (DHAP) to D-glyceraldehyde-3-phosphate (G3P). The chain is Triosephosphate isomerase from Ehrlichia chaffeensis (strain ATCC CRL-10679 / Arkansas).